A 206-amino-acid chain; its full sequence is Cytochrome c (206 aa).

3 consecutive transmembrane segments (helical) span residues 10–30 (IALA…VSFL), 49–69 (FMGW…LGKM), and 76–96 (KWFL…FLSL). Cys152, Cys155, His156, and Met182 together coordinate heme.

Monomer. Component of the photosynthetic reaction center composed of protein subunits PscA, PscC, PscB and PscD. The reaction center interacts with FmoA (which forms the Fenna-Matthews-Olson (FMO) complex). The reaction center/FmoA complex has two PscA subunits, one PscB and one PscD subunit, probably two FmoA complexes and at least one PscC subunit. In terms of processing, binds 1 heme group per subunit.

The protein localises to the cell inner membrane. Monoheme cytochrome which is the immediate electron donor to P840 of the photosynthetic reaction center complex. The sequence is that of Cytochrome c (pscC) from Chlorobaculum tepidum (strain ATCC 49652 / DSM 12025 / NBRC 103806 / TLS) (Chlorobium tepidum).